A 263-amino-acid polypeptide reads, in one-letter code: N-acyl homoserine lactonase AttM (263 aa).

7 residues coordinate Zn(2+): His-103, His-105, Asp-107, His-108, His-180, Asp-202, and His-247.

This sequence belongs to the metallo-beta-lactamase superfamily. It depends on Zn(2+) as a cofactor.

It catalyses the reaction an N-acyl-L-homoserine lactone + H2O = an N-acyl-L-homoserine + H(+). The chain is N-acyl homoserine lactonase AttM from Azorhizobium caulinodans (strain ATCC 43989 / DSM 5975 / JCM 20966 / LMG 6465 / NBRC 14845 / NCIMB 13405 / ORS 571).